Consider the following 190-residue polypeptide: RNA pyrophosphohydrolase (190 aa).

In terms of domain architecture, Nudix hydrolase spans 6 to 149 (GYRPNVGIIL…KRDVYTQALN (144 aa)). The Nudix box signature appears at 38-59 (GGIKYGESPVQAMYRELHEEVG). The tract at residues 167-190 (QRVHGPRSTDSPSSETDGHAHIAG) is disordered.

The protein belongs to the Nudix hydrolase family. RppH subfamily. A divalent metal cation serves as cofactor.

Functionally, accelerates the degradation of transcripts by removing pyrophosphate from the 5'-end of triphosphorylated RNA, leading to a more labile monophosphorylated state that can stimulate subsequent ribonuclease cleavage. This Bordetella pertussis (strain Tohama I / ATCC BAA-589 / NCTC 13251) protein is RNA pyrophosphohydrolase.